We begin with the raw amino-acid sequence, 884 residues long: Cytosolic carboxypeptidase-like protein 5 (884 aa).

The Peptidase M14 domain occupies 157–570 (YPFSYSDCQD…AMAIAALDMA (414 aa)). Zn(2+) is bound by residues histidine 252 and glutamate 255. Disordered stretches follow at residues 343 to 364 (HPQS…PLSD) and 376 to 401 (HLGH…KASG). Histidine 434 serves as a coordination point for Zn(2+). Glutamate 516 serves as the catalytic Proton donor/acceptor. Disordered regions lie at residues 603–737 (LSST…HSTG) and 784–859 (QVRP…RICY). Polar residues predominate over residues 620–635 (PPRSNSGLPVSCSENP). 2 stretches are compositionally biased toward low complexity: residues 641–666 (SFST…NSPS) and 714–737 (PTSS…HSTG). Serine 839 is subject to Phosphoserine. Over residues 846–857 (ISCSLSDSQSRI) the composition is skewed to polar residues.

Belongs to the peptidase M14 family. Requires Zn(2+) as cofactor.

Its subcellular location is the cytoplasm. It is found in the cytosol. The protein localises to the nucleus. It localises to the cytoskeleton. The protein resides in the spindle. Its subcellular location is the midbody. The enzyme catalyses gamma-L-glutamyl-L-glutamyl-[protein] + H2O = L-glutamyl-[protein] + L-glutamate. The catalysed reaction is (L-glutamyl)(n+1)-gamma-L-glutamyl-L-glutamyl-[protein] + H2O = (L-glutamyl)(n)-gamma-L-glutamyl-L-glutamyl-[protein] + L-glutamate. It carries out the reaction C-terminal L-alpha-aminoacyl-L-glutamyl-[tubulin] + H2O = C-terminal L-alpha-aminoacyl-[tubulin] + L-glutamate. It catalyses the reaction C-terminal L-alpha-aminoacyl-L-glutamyl-L-glutamyl-[tubulin] + H2O = C-terminal L-alpha-aminoacyl-L-glutamyl-[tubulin] + L-glutamate. Functionally, metallocarboxypeptidase that mediates deglutamylation of tubulin and non-tubulin target proteins. Catalyzes the removal of polyglutamate side chains present on the gamma-carboxyl group of glutamate residues within the C-terminal tail of alpha- and beta-tubulin. Cleaves alpha- and gamma-linked polyglutamate tubulin side-chain, as well as the branching point glutamate. Also catalyzes the removal of alpha-linked glutamate residues from the carboxy-terminus of alpha-tubulin. Mediates deglutamylation of nucleotidyltransferase CGAS, leading to CGAS antiviral defense response activation. This is Cytosolic carboxypeptidase-like protein 5 (AGBL5) from Ailuropoda melanoleuca (Giant panda).